Reading from the N-terminus, the 264-residue chain is MKYMITSKGDEKSDLLRLNMIAGFGEYDMEYDDVEPEIVISIGGDGTFLSAFHQYEERLDEIAFIGIHTGHLGFYADWRPAEADKLVKLLAKGEYQKVSYPLLKTTVKYGIGKKEATYLALNESTVKSSGGPFVVDVVINDIHFERFRGDGLCMSTPSGTTAYNKSLGGALMHPSIEAMQLTEMASINNRVYRTIGSPLVFPKHHVVSLQPVNDKDFQISVDHLSILHRDVQEIRYEVSAKKIHFARFRSFPFWRRVHDSFIED.

The active-site Proton acceptor is the Asp-45. Residues 45 to 46 (DG), Gly-46, 122 to 123 (NE), Arg-148, Asp-150, Ser-158, 161 to 166 (TAYNKS), and His-223 each bind NAD(+).

The protein belongs to the NAD kinase family. In terms of assembly, homotetramer. A divalent metal cation serves as cofactor.

The protein resides in the cytoplasm. It catalyses the reaction NAD(+) + ATP = ADP + NADP(+) + H(+). Competitively inhibited by 5'-thioacetyladenosine (TAA) and di-(5'-thioadenosine) (DTA). In terms of biological role, involved in the regulation of the intracellular balance of NAD and NADP, and is a key enzyme in the biosynthesis of NADP. Catalyzes specifically the phosphorylation on 2'-hydroxyl of the adenosine moiety of NAD to yield NADP. The protein is NAD kinase 1 of Listeria monocytogenes serovar 1/2a (strain ATCC BAA-679 / EGD-e).